Here is a 259-residue protein sequence, read N- to C-terminus: L-cystine import ATP-binding protein TcyN (259 aa).

Residues 2-239 (IEIKNIHKQF…TKKDRTRQFL (238 aa)) form the ABC transporter domain. 34 to 41 (GPSGSGKT) serves as a coordination point for ATP.

This sequence belongs to the ABC transporter superfamily. L-cystine importer (TC 3.A.1.3.13) family. As to quaternary structure, the complex is composed of two ATP-binding proteins (TcyN), two transmembrane proteins (TcyL and TcyM) and two solute-binding proteins (TcyJ and TcyK).

It is found in the cell membrane. Part of the ABC transporter complex TcyJKLMN involved in L-cystine import. Responsible for energy coupling to the transport system. Is also involved in cystathionine, djenkolate, and S-methylcysteine transport. This is L-cystine import ATP-binding protein TcyN (tcyN) from Bacillus subtilis (strain 168).